A 550-amino-acid chain; its full sequence is Kinase suppressor of Ras B (550 aa).

Low complexity-rich tracts occupy residues 21 to 56 and 63 to 75; these read SFSSWRRSSTSGSISQSSRTTSKTTTSSSVTSSNPI and ATSSSSVLPSTSS. The tract at residues 21-87 is disordered; the sequence is SFSSWRRSST…PPPASAPPRI (67 aa). The Phorbol-ester/DAG-type zinc finger occupies 90–145; that stretch reads YHKMVPSKSKFRQCDVCEHIFIFDFVRKQHLDDVYACNVCGIRVHKGCLDRVKNDC. The disordered stretch occupies residues 172-196; sequence TTASISKSLTTSPTCSTSTTMSPAG. Positions 177–193 are enriched in low complexity; sequence SKSLTTSPTCSTSTTMS. The Protein kinase domain occupies 248–528; it reads VDVMTKIGDG…FQQIVKRITV (281 aa). A disordered region spans residues 530–550; the sequence is MPRKESNKQKRRSTAHENPLF.

The protein belongs to the protein kinase superfamily. TKL Ser/Thr protein kinase family. Interacts with ndk-1.

Functionally, probable inactive protein kinase which positively regulates Ras-mediated signaling probably acting at the level of let-60/ras or/and lin-45/raf. In the germline, regulates meiotic progression during oogenesis and mpk-1 (isoform b) phosphorylation. Plays a role in meiotic recombination events. Functions redundantly with ksr-1 in the Ras-mediated regulation of larval survival, the development of excretory canal, in determining vulval precursor cell fate during vulval induction and in mpk-1 phosphorylation in somatic cells. This chain is Kinase suppressor of Ras B, found in Caenorhabditis elegans.